A 262-amino-acid chain; its full sequence is Cyclin-dependent kinase inhibitor 1 (262 aa).

Residues 140 to 212 (SDVAEAGSEH…SAQQATRPKI (73 aa)) are disordered. Residues 160-169 (SGRDRERRET) are compositionally biased toward basic and acidic residues. Residues 198–208 (SAATASAQQAT) show a composition bias toward low complexity.

This sequence belongs to the CDI family. ICK/KRP subfamily. As to expression, expressed in roots, stems, leaves and apex.

Functionally, regulates the production of endosperm cells, affecting seed filling and embryo development. Regulates endoreduplication of endosperm cells. May play a role in the exit from the mitotic cell cycle during rice grain formation. Inhibitis leaf elongation rates by decreasing cell number, that is partly compensated by increased cell size. May not affect growth rate or cell size of the primary root. The chain is Cyclin-dependent kinase inhibitor 1 (KRP1) from Oryza sativa subsp. japonica (Rice).